Reading from the N-terminus, the 160-residue chain is Cytochrome b6-f complex subunit 4 (160 aa).

A run of 3 helical transmembrane segments spans residues 36-56 (LLYIFPVVILGTIACVVGLAV), 95-115 (LLGIALQTLIPLGLMILPFIE), and 128-148 (IAMSVFLFGTFLTIYLGIGAC).

Belongs to the cytochrome b family. PetD subfamily. In terms of assembly, the 4 large subunits of the cytochrome b6-f complex are cytochrome b6, subunit IV (17 kDa polypeptide, PetD), cytochrome f and the Rieske protein, while the 4 small subunits are PetG, PetL, PetM and PetN. The complex functions as a dimer.

The protein localises to the cellular thylakoid membrane. In terms of biological role, component of the cytochrome b6-f complex, which mediates electron transfer between photosystem II (PSII) and photosystem I (PSI), cyclic electron flow around PSI, and state transitions. The sequence is that of Cytochrome b6-f complex subunit 4 from Prochlorococcus marinus (strain MIT 9301).